The chain runs to 362 residues: 3-dehydroquinate synthase (362 aa).

NAD(+) contacts are provided by residues aspartate 71–lysine 76, glycine 105–aspartate 109, threonine 129–threonine 130, lysine 142, lysine 151, and cysteine 169–threonine 172. Positions 184, 247, and 264 each coordinate Zn(2+).

The protein belongs to the sugar phosphate cyclases superfamily. Dehydroquinate synthase family. Requires Co(2+) as cofactor. It depends on Zn(2+) as a cofactor. NAD(+) is required as a cofactor.

It localises to the cytoplasm. The catalysed reaction is 7-phospho-2-dehydro-3-deoxy-D-arabino-heptonate = 3-dehydroquinate + phosphate. Its pathway is metabolic intermediate biosynthesis; chorismate biosynthesis; chorismate from D-erythrose 4-phosphate and phosphoenolpyruvate: step 2/7. In terms of biological role, catalyzes the conversion of 3-deoxy-D-arabino-heptulosonate 7-phosphate (DAHP) to dehydroquinate (DHQ). This Salmonella schwarzengrund (strain CVM19633) protein is 3-dehydroquinate synthase.